Consider the following 1091-residue polypeptide: Ubiquitin carboxyl-terminal hydrolase 36 (1091 aa).

The segment at 115 to 152 (ANGHDNNGRKLSDHPNQNHNHANPNGHHANPNELPKPK) is disordered. The span at 128 to 146 (HPNQNHNHANPNGHHANPN) shows a compositional bias: low complexity. Positions 176–484 (SGMINAGNTC…NAYIMFYELD (309 aa)) constitute a USP domain. Catalysis depends on cysteine 185, which acts as the Nucleophile. The Proton acceptor role is filled by histidine 443. Phosphoserine occurs at positions 518 and 522. 4 disordered regions span residues 523 to 572 (PAKF…KSPL), 594 to 892 (PTAN…ELLK), 972 to 1007 (QRDLADDEENEMDRGRQRKVKSGSAKISNSTPGYNP), and 1068 to 1091 (LAAGGGFTRRQPTHSAQQQQQQQS). Positions 547 to 572 (TTIQFKPQHQPSHQQNGVQQSAKSPL) are enriched in polar residues. Positions 594–612 (PTANGNKSSSNHSNHKSVN) are enriched in low complexity. The span at 643–652 (KMDDCMDSGK) shows a compositional bias: basic and acidic residues. Over residues 653–667 (PKSPVKTPVKTPLKS) the composition is skewed to low complexity. Phosphothreonine occurs at positions 659 and 663. 2 positions are modified to phosphoserine: serine 673 and serine 675. Residues 691 to 702 (RSSDSSDSEHEP) are compositionally biased toward basic and acidic residues. Polar residues predominate over residues 703 to 727 (TTSSVQLNGHSKTNGSLSNGSSKST). The residue at position 749 (serine 749) is a Phosphoserine. Residues 749–759 (SEDDDDDEDEP) show a composition bias toward acidic residues. Residues 769–780 (PQKQSQSQSRSG) are compositionally biased toward low complexity. Over residues 781-790 (PPSPKTPPSP) the composition is skewed to pro residues. Serine 783 bears the Phosphoserine mark. The residue at position 786 (threonine 786) is a Phosphothreonine. Phosphoserine is present on serine 789. The segment covering 806–821 (DGDDDEDDDDDDDEVV) has biased composition (acidic residues). Threonine 829 bears the Phosphothreonine mark. 2 stretches are compositionally biased toward polar residues: residues 838-850 (FASSKTATDSPTT) and 863-886 (AIKTQQQPRAGNGYQSEATANGGT). Phosphoserine is present on serine 847. Residue threonine 850 is modified to Phosphothreonine.

This sequence belongs to the peptidase C19 family. As to quaternary structure, interacts with atms/PAF1, but not with CycT.

It is found in the nucleus. The protein resides in the nucleolus. It catalyses the reaction Thiol-dependent hydrolysis of ester, thioester, amide, peptide and isopeptide bonds formed by the C-terminal Gly of ubiquitin (a 76-residue protein attached to proteins as an intracellular targeting signal).. Its function is as follows. Required for maintaining multiple types of adult stem cells, including male and female germline, epithelial follicle cell and intestinal stem cells. May function as a transcriptional repressor by continually deubiquiting histone H2B at the promoters of genes critical for cellular differentiation, thereby preventing histone H3 'Lys-4' trimethylation (H3K4). Controls selective autophagy activation by ubiquitinated proteins. The chain is Ubiquitin carboxyl-terminal hydrolase 36 (Usp36) from Drosophila ananassae (Fruit fly).